Consider the following 177-residue polypeptide: Large ribosomal subunit protein uL6 (177 aa).

Belongs to the universal ribosomal protein uL6 family. In terms of assembly, part of the 50S ribosomal subunit.

This protein binds to the 23S rRNA, and is important in its secondary structure. It is located near the subunit interface in the base of the L7/L12 stalk, and near the tRNA binding site of the peptidyltransferase center. The chain is Large ribosomal subunit protein uL6 from Aliivibrio fischeri (strain MJ11) (Vibrio fischeri).